The sequence spans 154 residues: Methylglyoxal synthase (154 aa).

Positions 6–154 constitute an MGS-like domain; sequence GALPSRKQIA…AYIAERTKKL (149 aa). Substrate-binding positions include His19, Lys23, 45–48, and 65–66; these read TGTT and SG. The Proton donor/acceptor role is filled by Asp71. Position 98 (His98) interacts with substrate.

This sequence belongs to the methylglyoxal synthase family.

The enzyme catalyses dihydroxyacetone phosphate = methylglyoxal + phosphate. Functionally, catalyzes the formation of methylglyoxal from dihydroxyacetone phosphate. The chain is Methylglyoxal synthase from Saccharophagus degradans (strain 2-40 / ATCC 43961 / DSM 17024).